We begin with the raw amino-acid sequence, 348 residues long: Dihydroorotase (348 aa).

Residues H14 and H16 each coordinate Zn(2+). Substrate-binding positions include 16–18 (HLR) and N42. K100, H137, and H175 together coordinate Zn(2+). N6-carboxylysine is present on K100. H137 contacts substrate. Residue L220 coordinates substrate. Residue D248 coordinates Zn(2+). Residue D248 is part of the active site. 2 residues coordinate substrate: H252 and A264.

It belongs to the metallo-dependent hydrolases superfamily. DHOase family. Class II DHOase subfamily. As to quaternary structure, homodimer. The cofactor is Zn(2+).

It catalyses the reaction (S)-dihydroorotate + H2O = N-carbamoyl-L-aspartate + H(+). It participates in pyrimidine metabolism; UMP biosynthesis via de novo pathway; (S)-dihydroorotate from bicarbonate: step 3/3. In terms of biological role, catalyzes the reversible cyclization of carbamoyl aspartate to dihydroorotate. The protein is Dihydroorotase of Pseudomonas aeruginosa (strain ATCC 15692 / DSM 22644 / CIP 104116 / JCM 14847 / LMG 12228 / 1C / PRS 101 / PAO1).